The chain runs to 205 residues: Imidazoleglycerol-phosphate dehydratase (205 aa).

Belongs to the imidazoleglycerol-phosphate dehydratase family.

Its subcellular location is the cytoplasm. It catalyses the reaction D-erythro-1-(imidazol-4-yl)glycerol 3-phosphate = 3-(imidazol-4-yl)-2-oxopropyl phosphate + H2O. The protein operates within amino-acid biosynthesis; L-histidine biosynthesis; L-histidine from 5-phospho-alpha-D-ribose 1-diphosphate: step 6/9. The polypeptide is Imidazoleglycerol-phosphate dehydratase (Chloroflexus aurantiacus (strain ATCC 29366 / DSM 635 / J-10-fl)).